The following is a 336-amino-acid chain: Inactive serine/threonine-protein kinase BKN2 (336 aa).

The segment at 1–25 (MGNCLKPLKEQPPSASPKPLTIPSS) is disordered. Gly2 carries N-myristoyl glycine lipidation. Cys4 carries S-palmitoyl cysteine lipidation. Residues 52–332 (YMVIKGNDNG…QVFDGLNDIA (281 aa)) form the Protein kinase domain.

Belongs to the protein kinase superfamily. Ser/Thr protein kinase family. As to quaternary structure, component of an immune signaling complex made of, at least, SZE1, BKN2/SZE2, ZAR1 and ZED1. Interacts directly with ZAR1 and Pseudomonas syringae HOPZ1A at the plasma membrane. N-terminal myristoylation is critical for plasma membrane localization and implication in defense responses. Expressed in stigma and ovaries in flowers, and in stems and seedlings.

It is found in the cell membrane. Functionally, together with SZE1 and ZED1, required for effector-triggered immunity (e.g. Pseudomonas syringae type III effector HopZ1a) via the activation of ZAR1, thus being essential for resistance against P. syringae pv. tomato DC3000 expressing HopZ1a. Collaboratively with BKN1, involved in compatible pollen-stigma interactions. The chain is Inactive serine/threonine-protein kinase BKN2 from Arabidopsis thaliana (Mouse-ear cress).